A 21-amino-acid polypeptide reads, in one-letter code: Fibrinogen beta chain (21 aa).

Gln1 is subject to Pyrrolidone carboxylic acid. Positions 1 to 11 (QFPTDYDEGED) are enriched in acidic residues. The interval 1–21 (QFPTDYDEGEDDRPKSGLGAR) is disordered. Thr4 carries an O-linked (GalNAc...) threonine glycan. Residue Tyr6 is modified to Sulfotyrosine.

As to quaternary structure, heterohexamer; disulfide linked. Contains 2 sets of 3 non-identical chains (alpha, beta and gamma). The 2 heterotrimers are in head to head conformation with the N-termini in a small central domain. Conversion of fibrinogen to fibrin is triggered by thrombin, which cleaves fibrinopeptides A and B from alpha and beta chains, and thus exposes the N-terminal polymerization sites responsible for the formation of the soft clot.

It is found in the secreted. Cleaved by the protease thrombin to yield monomers which, together with fibrinogen alpha (FGA) and fibrinogen gamma (FGG), polymerize to form an insoluble fibrin matrix. Fibrin has a major function in hemostasis as one of the primary components of blood clots. In addition, functions during the early stages of wound repair to stabilize the lesion and guide cell migration during re-epithelialization. Was originally thought to be essential for platelet aggregation, based on in vitro studies using anticoagulated blood. However subsequent studies have shown that it is not absolutely required for thrombus formation in vivo. Enhances expression of SELP in activated platelets. Maternal fibrinogen is essential for successful pregnancy. Fibrin deposition is also associated with infection, where it protects against IFNG-mediated hemorrhage. May also facilitate the antibacterial immune response via both innate and T-cell mediated pathways. The sequence is that of Fibrinogen beta chain (FGB) from Syncerus caffer (African buffalo).